We begin with the raw amino-acid sequence, 154 residues long: Superoxide dismutase [Cu-Zn] (154 aa).

Residues His47, His49, and His64 each contribute to the Cu cation site. A disulfide bridge links Cys58 with Cys147. The Zn(2+) site is built by His64, His72, His81, and Asp84. His121 contributes to the Cu cation binding site. Residues Asp125–Lys137 show a composition bias toward basic and acidic residues. The disordered stretch occupies residues Asp125–Arg144. Residue Arg144 participates in substrate binding.

Belongs to the Cu-Zn superoxide dismutase family. As to quaternary structure, homodimer. The cofactor is Cu cation. Zn(2+) is required as a cofactor.

It localises to the cytoplasm. The enzyme catalyses 2 superoxide + 2 H(+) = H2O2 + O2. Its function is as follows. Destroys radicals which are normally produced within the cells and which are toxic to biological systems. The polypeptide is Superoxide dismutase [Cu-Zn] (sodC) (Aspergillus oryzae (strain ATCC 42149 / RIB 40) (Yellow koji mold)).